Here is a 78-residue protein sequence, read N- to C-terminus: Cell division topological specificity factor (78 aa).

This sequence belongs to the MinE family.

Prevents the cell division inhibition by proteins MinC and MinD at internal division sites while permitting inhibition at polar sites. This ensures cell division at the proper site by restricting the formation of a division septum at the midpoint of the long axis of the cell. In Helicobacter hepaticus (strain ATCC 51449 / 3B1), this protein is Cell division topological specificity factor.